A 344-amino-acid chain; its full sequence is MRKLFLDAFGEKKLDKPPVWIMRQAGRYLPEYRAVRAKFDNFMDMCRNADACCEVALHPLQRYDLDAAIVFSDILTIPEAMGMDLKFIKGTGPVFSEPIQSQKDLDKLKSIEDSIGSLDYVYNAVKTTSSTINVPLIGFTGSPWTLAAYMIEGSGSKQFNKLRKMMYANPQLMHSLLQRLADITIIYLLEQVKAGASCVMIFDTWGGILPLEHYKNFSLKYMEYIAKNVKQKINIPIVFFTKGGSNFFEEIKDKSCDGVGVDWSVTLKQARHRIGVGKVLQGNFDPAFLYGSKQSIRETVRANIEFIQSDKLNNYIVNLGHGIYPDIDPDSVRVMIDAIREFSA.

Substrate is bound by residues 23–27, D73, Y149, T204, and H321; that span reads RQAGR.

Belongs to the uroporphyrinogen decarboxylase family. In terms of assembly, homodimer.

It localises to the cytoplasm. It carries out the reaction uroporphyrinogen III + 4 H(+) = coproporphyrinogen III + 4 CO2. The protein operates within porphyrin-containing compound metabolism; protoporphyrin-IX biosynthesis; coproporphyrinogen-III from 5-aminolevulinate: step 4/4. Its function is as follows. Catalyzes the decarboxylation of four acetate groups of uroporphyrinogen-III to yield coproporphyrinogen-III. The chain is Uroporphyrinogen decarboxylase from Francisella tularensis subsp. novicida (strain U112).